Consider the following 393-residue polypeptide: MTNSNRIKLTWISFLSYALTGALVIVTGMVMGNIADYFNLPVSSMSNTFTFLNAGILISIFLNAWLMEIVPLKTQLRFGFLLMVLAVAGLMFSHSLALFSAAMFILGVVSGITMSIGTFLVTQMYEGRQRGSRLLFTDSFFSMAGMIFPMIAAFLLARSIEWYWVYACIGLVYVAIFILTFGCEFPALGKHAPKTDAPVEKEKWGIGVLFLSVAALCYILGQLGFISWVPEYAKGLGMSLNDAGTLVSNFWMSYMVGMWAFSFILRFFDLQRILTVLAGLAAILMYVFNTGTPAYMAWSILALGFFSSAIYTTIITLGSQQTKVPSPKLVNFVLTCGTIGTMLTFVVTGPIVEHSGPQAALLTANGLYAVVFVMCFLLGFVSRHRQHNTLTSH.

The next 12 helical transmembrane spans lie at W11–M31, F51–P71, F78–L98, A101–V121, L134–F154, W162–G182, I206–I226, T245–L265, I273–P293, A297–L317, F332–V352, and L361–V381.

It belongs to the major facilitator superfamily. TsgA family.

It is found in the cell inner membrane. The chain is Protein TsgA from Escherichia coli O6:K15:H31 (strain 536 / UPEC).